The primary structure comprises 432 residues: MRVVILGSGVVGVTSAWYLSQAGHDVTVIDRESGPAQETSAANAGQISPGYAAPWAAPGVPLKAIKWMFQRHAPLAVRLDGTPFQLKWMWQMLRNCDTRHYMENKGRMVRLAEYSRDCLKTLRAATGIEYEGRQGGTLQLFRTAQQYENATRDIAVLEDAGVPYQLLEASRLAEVEPALAEVAHKLTGGLRLPNDETGDCQLFTQRLARMAEQAGVTFRFNTPVEKLLYENDQIYGVKCADEIIKADAYVMAFGSYSTAMLKGIVDIPVYPLKGYSLTIPIVEPDGAPVSTILDETYKIAITRFDKRIRVGGMAEIVGFNTDLLQPRRETLEMVVRDLFPRGGHIEQATFWTGLRPMTPDGTPVVGRTRYKNLWLNTGHGTLGWTMACGSGQLLSDILLGRTPAIPYDDLSVARYRSDFTPTRPQRLHSAHN.

Residue 3 to 17 (VVILGSGVVGVTSAW) participates in FAD binding.

This sequence belongs to the DadA oxidoreductase family. FAD serves as cofactor.

It localises to the cell inner membrane. It catalyses the reaction a D-alpha-amino acid + A + H2O = a 2-oxocarboxylate + AH2 + NH4(+). The protein operates within amino-acid degradation; D-alanine degradation; NH(3) and pyruvate from D-alanine: step 1/1. Oxidative deamination of D-amino acids. This is D-amino acid dehydrogenase from Salmonella typhi.